The following is a 217-amino-acid chain: Octanoyltransferase (217 aa).

A BPL/LPL catalytic domain is found at 31 to 206; that stretch reads KSVMDEAWLL…ELVSRLGYAE (176 aa). Substrate contacts are provided by residues 70 to 77, 137 to 139, and 150 to 152; these read RGGQVTYH, SLG, and GLA. The active-site Acyl-thioester intermediate is Cys-168.

It belongs to the LipB family.

Its subcellular location is the cytoplasm. The enzyme catalyses octanoyl-[ACP] + L-lysyl-[protein] = N(6)-octanoyl-L-lysyl-[protein] + holo-[ACP] + H(+). It functions in the pathway protein modification; protein lipoylation via endogenous pathway; protein N(6)-(lipoyl)lysine from octanoyl-[acyl-carrier-protein]: step 1/2. Catalyzes the transfer of endogenously produced octanoic acid from octanoyl-acyl-carrier-protein onto the lipoyl domains of lipoate-dependent enzymes. Lipoyl-ACP can also act as a substrate although octanoyl-ACP is likely to be the physiological substrate. The polypeptide is Octanoyltransferase (Pseudomonas aeruginosa (strain UCBPP-PA14)).